A 177-amino-acid chain; its full sequence is Large ribosomal subunit protein uL10 (177 aa).

It belongs to the universal ribosomal protein uL10 family. Part of the ribosomal stalk of the 50S ribosomal subunit. The N-terminus interacts with L11 and the large rRNA to form the base of the stalk. The C-terminus forms an elongated spine to which L12 dimers bind in a sequential fashion forming a multimeric L10(L12)X complex.

Its function is as follows. Forms part of the ribosomal stalk, playing a central role in the interaction of the ribosome with GTP-bound translation factors. The protein is Large ribosomal subunit protein uL10 of Thermoanaerobacter pseudethanolicus (strain ATCC 33223 / 39E) (Clostridium thermohydrosulfuricum).